We begin with the raw amino-acid sequence, 318 residues long: Ferrochelatase (318 aa).

Residues histidine 186 and glutamate 264 each contribute to the Fe cation site.

It belongs to the ferrochelatase family.

The protein localises to the cytoplasm. The enzyme catalyses heme b + 2 H(+) = protoporphyrin IX + Fe(2+). It functions in the pathway porphyrin-containing compound metabolism; protoheme biosynthesis; protoheme from protoporphyrin-IX: step 1/1. In terms of biological role, catalyzes the ferrous insertion into protoporphyrin IX. In Chlamydia caviae (strain ATCC VR-813 / DSM 19441 / 03DC25 / GPIC) (Chlamydophila caviae), this protein is Ferrochelatase.